A 121-amino-acid polypeptide reads, in one-letter code: Nitrogenase-stabilizing/protective protein NifW (121 aa).

The protein belongs to the NifW family. Homotrimer; associates with NifD.

In terms of biological role, may protect the nitrogenase Fe-Mo protein from oxidative damage. This is Nitrogenase-stabilizing/protective protein NifW from Leptothrix cholodnii (strain ATCC 51168 / LMG 8142 / SP-6) (Leptothrix discophora (strain SP-6)).